Here is a 419-residue protein sequence, read N- to C-terminus: Voltage-gated potassium channel subunit beta-1 (419 aa).

The segment at 1–52 (MLAARTGAAGSQISEENTKLRRQSGFSVAGKDKSPKKASENAKDSSLSPSGE) is disordered. Positions 30-43 (GKDKSPKKASENAK) are enriched in basic and acidic residues. The NADP(+) site is built by Thr-108, Trp-109, Gln-115, and Asp-137. The active-site Proton donor/acceptor is the Tyr-142. NADP(+)-binding residues include Asn-210, Ser-240, Arg-241, Gln-266, Trp-295, Ser-296, Pro-297, Leu-298, Ala-299, Cys-300, Lys-306, Arg-316, Gly-375, Ser-377, Gln-381, Glu-384, and Asn-385.

It belongs to the shaker potassium channel beta subunit family. In terms of assembly, homotetramer. Interaction with tetrameric potassium channel alpha subunits gives rise to a heterooctamer. Identified in potassium channel complexes containing KCNA1, KCNA2, KCNA4, KCNA5, KCNA6, KCNAB1 and KCNAB2. Part of a complex containing KCNA1, KCNA4 and LGI1; interaction with LGI1 inhibits down-regulation of KCNA1 channel activity. Interacts with the dimer formed by GNB1 and GNG2; this enhances KCNA1 binding. Interacts with SQSTM1. In terms of tissue distribution, in brain, expression is most prominent in caudate nucleus, hippocampus and thalamus. Significant expression also detected in amygdala and subthalamic nucleus. Also expressed in both healthy and cardiomyopathic heart. Up to four times more abundant in left ventricle than left atrium.

The protein localises to the cytoplasm. It is found in the membrane. It localises to the cell membrane. The catalysed reaction is a primary alcohol + NADP(+) = an aldehyde + NADPH + H(+). The enzyme catalyses a secondary alcohol + NADP(+) = a ketone + NADPH + H(+). Its function is as follows. Regulatory subunit of the voltage-gated potassium (Kv) Shaker channels composed of pore-forming and potassium-conducting alpha subunits and of regulatory beta subunits. The beta-1/KCNAB1 cytoplasmic subunit mediates closure of delayed rectifier potassium channels by physically obstructing the pore via its N-terminal domain and increases the speed of channel closure for other family members. Promotes the inactivation of Kv1.1/KCNA1, Kv1.2/KCNA2, Kv1.4/KCNA4, Kv1.5/KCNA5 and Kv1.6/KCNA6 alpha subunit-containing channels. Displays nicotinamide adenine dinucleotide phosphate (NADPH)-dependent aldoketoreductase activity by catalyzing the NADPH-dependent reduction of a variety of endogenous aldehydes and ketones. The binding of NADPH is required for efficient down-regulation of potassium channel activity. Oxidation of the bound NADPH restrains N-terminal domain from blocking the channel, thereby decreasing N-type inactivation of potassium channel activity. Functionally, isoform KvB1.2 shows no effect on KCNA1, KCNA2 or KCNB1. In Homo sapiens (Human), this protein is Voltage-gated potassium channel subunit beta-1.